The primary structure comprises 51 residues: Insulin-1 (51 aa).

Cystine bridges form between Cys8–Cys37, Cys20–Cys50, and Cys36–Cys41.

This sequence belongs to the insulin family. Heterodimer of a B chain and an A chain linked by two disulfide bonds.

Its subcellular location is the secreted. Functionally, insulin decreases blood glucose concentration. It increases cell permeability to monosaccharides, amino acids and fatty acids. It accelerates glycolysis, the pentose phosphate cycle, and glycogen synthesis in liver. The chain is Insulin-1 (ins1) from Batrachoididae sp. (Toadfish).